Here is an 87-residue protein sequence, read N- to C-terminus: MAHKKGTGSTRNGRDSNSKRLGVKAYGGEKVTAGSILIRQRGTSVLPGANVGQGKDDTLFALVDGIVNFETIKRSLKKRKRISVSLA.

Residues 1-26 (MAHKKGTGSTRNGRDSNSKRLGVKAY) are disordered.

Belongs to the bacterial ribosomal protein bL27 family.

The chain is Large ribosomal subunit protein bL27 from Prochlorococcus marinus (strain SARG / CCMP1375 / SS120).